Reading from the N-terminus, the 141-residue chain is Nucleoside diphosphate kinase (141 aa).

ATP contacts are provided by lysine 11, phenylalanine 59, arginine 87, threonine 93, arginine 104, and asparagine 114. The active-site Pros-phosphohistidine intermediate is the histidine 117.

It belongs to the NDK family. In terms of assembly, homotetramer. Mg(2+) serves as cofactor.

The protein localises to the cytoplasm. The catalysed reaction is a 2'-deoxyribonucleoside 5'-diphosphate + ATP = a 2'-deoxyribonucleoside 5'-triphosphate + ADP. The enzyme catalyses a ribonucleoside 5'-diphosphate + ATP = a ribonucleoside 5'-triphosphate + ADP. Functionally, major role in the synthesis of nucleoside triphosphates other than ATP. The ATP gamma phosphate is transferred to the NDP beta phosphate via a ping-pong mechanism, using a phosphorylated active-site intermediate. The chain is Nucleoside diphosphate kinase from Nitrosomonas eutropha (strain DSM 101675 / C91 / Nm57).